A 162-amino-acid polypeptide reads, in one-letter code: Allophycocyanin beta chain (162 aa).

Asn72 carries the N4-methylasparagine modification. (2R,3E)-phycocyanobilin is bound at residue Cys82.

Belongs to the phycobiliprotein family. Heterodimer of an alpha and a beta chain. Post-translationally, contains one covalently linked phycocyanobilin chromophore.

It localises to the cellular thylakoid membrane. Functionally, light-harvesting photosynthetic bile pigment-protein from the phycobiliprotein complex. Allophycocyanin has a maximum absorption at approximately 650 nanometers. The chain is Allophycocyanin beta chain from Microchaete diplosiphon (Fremyella diplosiphon).